The chain runs to 207 residues: Ras-related protein Rab-8B (207 aa).

Residues S17, G18, V19, G20, K21, T22, C23, T35, S39, and T40 each contribute to the GTP site. A Mg(2+)-binding site is contributed by T22. Short sequence motifs (switch) lie at residues 31–45 (DAFNTTFISTIGIDF) and 63–80 (DTAGQERFRTITTAYYRG). Residues T40 and D63 each contribute to the Mg(2+) site. A GTP-binding site is contributed by G66. T72 carries the phosphothreonine modification. GTP-binding residues include N121, K122, D124, A152, and K153. Phosphoserine occurs at positions 180 and 183. C204 carries the post-translational modification Cysteine methyl ester. C204 carries S-geranylgeranyl cysteine lipidation. Residues 205–207 (LLL) constitute a propeptide, removed in mature form.

Belongs to the small GTPase superfamily. Rab family. Associated with actin, delta-catenin and alpha and beta tubulins. Interacts with OTOF. Interacts with PEX5R. Interacts with RAB3IP. Interacts with VIM. Interacts with CDH1. Interacts with MICALL2. Interacts with GDI1, GDI2, CHML and CHM; phosphorylation at Thr-72 disrupts these interactions. Interacts with MICAL1. It depends on Mg(2+) as a cofactor. Phosphorylation of Thr-72 in the switch II region by LRRK2 prevents the association of RAB regulatory proteins, including CHM, CHML and RAB GDP dissociation inhibitors GDI1 and GDI2.

It is found in the cell membrane. The protein localises to the cytoplasmic vesicle. It localises to the phagosome membrane. Its subcellular location is the endosome membrane. The catalysed reaction is GTP + H2O = GDP + phosphate + H(+). Its activity is regulated as follows. Regulated by guanine nucleotide exchange factors (GEFs) including RAB3IP/RABIN8 which promotes the exchange of bound GDP for free GTP. Regulated by GTPase activating proteins (GAPs) which increase the GTP hydrolysis activity. Inhibited by GDP dissociation inhibitors (GDIs). Its function is as follows. The small GTPases Rab are key regulators of intracellular membrane trafficking, from the formation of transport vesicles to their fusion with membranes. Rabs cycle between an inactive GDP-bound form and an active GTP-bound form that is able to recruit to membranes different sets of downstream effectors directly responsible for vesicle formation, movement, tethering and fusion. RAB8B may be involved in polarized vesicular trafficking and neurotransmitter release. May participate in cell junction dynamics in Sertoli cells. May also participate in the export of a subset of neosynthesized proteins through a Rab8-Rab10-Rab11-dependent endososomal export route. This Bos taurus (Bovine) protein is Ras-related protein Rab-8B (RAB8B).